Reading from the N-terminus, the 333-residue chain is Adenosine deaminase (333 aa).

Residues His12 and His14 each contribute to the Zn(2+) site. The substrate site is built by His14, Asp16, and Gly170. Residue His197 participates in Zn(2+) binding. Catalysis depends on Glu200, which acts as the Proton donor. Asp278 contacts Zn(2+). Residue Asp279 coordinates substrate.

It belongs to the metallo-dependent hydrolases superfamily. Adenosine and AMP deaminases family. Adenosine deaminase subfamily. Zn(2+) is required as a cofactor.

The catalysed reaction is adenosine + H2O + H(+) = inosine + NH4(+). It catalyses the reaction 2'-deoxyadenosine + H2O + H(+) = 2'-deoxyinosine + NH4(+). Its function is as follows. Catalyzes the hydrolytic deamination of adenosine and 2-deoxyadenosine. This Shigella flexneri serotype 5b (strain 8401) protein is Adenosine deaminase.